We begin with the raw amino-acid sequence, 502 residues long: Alpha-globin transcription factor CP2 (502 aa).

The 238-residue stretch at 63 to 300 (EILPFQYVLC…SPGFNSSHSS (238 aa)) folds into the Grh/CP2 DB domain. The segment at 133–386 (EHQQLEGWRW…LFNALKGRMV (254 aa)) is DNA-binding. Residues 241–265 (KGADRKQKIDREKMEKRTPHEKEKY) are compositionally biased toward basic and acidic residues. Disordered stretches follow at residues 241–268 (KGAD…YQPS) and 294–326 (FNSS…NLLP). A Phosphoserine modification is found at S353.

The protein belongs to the grh/CP2 family. CP2 subfamily. Binds to DNA as a dimer. Interacts with UBP1 and PIAS1, and is probably part of a complex containing TFCP2, UBP1 and PIAS1. Component of the SSP (stage selector protein) complex, which appears to be a heteromer of TFCP2 and 2 copies of NFE4.

The protein resides in the nucleus. In terms of biological role, binds a variety of cellular promoters including fibrinogen, alpha-globin promoters. Activation of the alpha-globin promoter in erythroid cells is via synergistic interaction with UBP1. Functions as part of the SSP (stage selector protein) complex. Facilitates the interaction of the gamma-globin genes with enhancer elements contained in the locus control region in fetal erythroid cells. Interacts by binding to the stage selector element (SSE) in the proximal gamma-globin promoter. The protein is Alpha-globin transcription factor CP2 (Tfcp2) of Mus musculus (Mouse).